Here is a 466-residue protein sequence, read N- to C-terminus: cAMP-dependent protein kinase regulatory subunit (466 aa).

Residues 25-231 (QFAANYFTKR…RLEKAVGKNF (207 aa)) are dimerization and phosphorylation. Over residues 71–80 (ASLSHGSSKA) the composition is skewed to low complexity. 4 disordered regions span residues 71–90 (ASLSHGSSKANASQSGISSS), 109–139 (STHIVDHLDSTHSNTTASPAKASGGDAPGIF), 154–179 (NSSVDPMAPEPTATTHSFPRRSVVNP), and 193–218 (SVSGETLQPDHLDDWKPENFQEKSPE). The span at 81–90 (NASQSGISSS) shows a compositional bias: polar residues. Residues 109-118 (STHIVDHLDS) show a composition bias toward basic and acidic residues. Ser-193 is subject to Phosphoserine. The segment covering 200-218 (QPDHLDDWKPENFQEKSPE) has biased composition (basic and acidic residues). Residues 232 to 347 (LFNK…LLKN), Glu-297, Arg-306, 350 to 466 (ILKS…RSKH), Glu-416, and Arg-425 each bind 3',5'-cyclic AMP.

Belongs to the cAMP-dependent kinase regulatory chain family. In terms of assembly, tetramer, composed of 2 regulatory (R) and 2 catalytic (C) subunits. In the presence of cAMP it dissociates into 2 active monomeric C subunits and an R dimer.

In Kluyveromyces lactis (strain ATCC 8585 / CBS 2359 / DSM 70799 / NBRC 1267 / NRRL Y-1140 / WM37) (Yeast), this protein is cAMP-dependent protein kinase regulatory subunit (PKAR).